The following is a 318-amino-acid chain: ATP phosphoribosyltransferase regulatory subunit (318 aa).

The protein belongs to the class-II aminoacyl-tRNA synthetase family. HisZ subfamily. In terms of assembly, heteromultimer composed of HisG and HisZ subunits.

It is found in the cytoplasm. The protein operates within amino-acid biosynthesis; L-histidine biosynthesis; L-histidine from 5-phospho-alpha-D-ribose 1-diphosphate: step 1/9. Functionally, required for the first step of histidine biosynthesis. May allow the feedback regulation of ATP phosphoribosyltransferase activity by histidine. This Lactococcus lactis subsp. cremoris (strain SK11) protein is ATP phosphoribosyltransferase regulatory subunit.